The primary structure comprises 354 residues: MKYMRHFLDFYHHKNTSEIMLLVFCAAVPGICTEIYYFGFGVLFQILLSVFFSVSFEFLVKRLRKQTVKSLFSDNSAAVTGVLIGISLPSLSPWWLSFFGAFFSIVIAKQIYGGLGNNIFNPAMTGYSILLVSFPILMTNWSFQNSSYFNLFDLNNTFSVIFCTDINHYYSLIDEFQMMYKFITQATPLEQIRTHVLDFNNKIDNIFEFVNYNYYFKNWKWISINISFLIGGIVLLGFNVICWRIPVSILFSLYVFFALDYYFFKKSMYYPIMQLFFGSTMFSVFFIATDPVTTSITKIGRIVFGCIVGFLIWLIRSFGNYPDAIAFSILLSNSIVPLIDHYTQPRVYGYVKKK.

A run of 4 helical transmembrane segments spans residues 19 to 39 (IMLL…YYFG), 40 to 60 (FGVL…EFLV), 77 to 99 (AAVT…LSFF), and 119 to 139 (IFNP…ILMT). Threonine 187 carries the post-translational modification FMN phosphoryl threonine. 5 consecutive transmembrane segments (helical) span residues 221–241 (WISI…FNVI), 245–265 (IPVS…YFFK), 268–288 (MYYP…FFIA), 295–315 (SITK…IWLI), and 319–339 (GNYP…VPLI).

This sequence belongs to the NqrB/RnfD family. As to quaternary structure, the complex is composed of six subunits: RnfA, RnfB, RnfC, RnfD, RnfE and RnfG. FMN serves as cofactor.

The protein localises to the cell inner membrane. Its function is as follows. Part of a membrane-bound complex that couples electron transfer with translocation of ions across the membrane. This Buchnera aphidicola subsp. Baizongia pistaciae (strain Bp) protein is Ion-translocating oxidoreductase complex subunit D.